The sequence spans 2144 residues: Reducing polyketide synthase PKS2 (2144 aa).

In terms of domain architecture, Ketosynthase family 3 (KS3) spans 10–436 (PMPLAIIGMS…GSNSHCIVRA (427 aa)). Catalysis depends on for beta-ketoacyl synthase activity residues Cys183, His319, and His360. The interval 538–855 (VFAFTGQGAQ…VPSLHRGQNA (318 aa)) is malonyl-CoA:ACP transacylase (MAT). An N-terminal hotdog fold region spans residues 924 to 1058 (HDLLGSINSS…ALVKCEATTD (135 aa)). A dehydratase (DH) domain region spans residues 924 to 1214 (HDLLGSINSS…RSYSIDGTTD (291 aa)). The PKS/mFAS DH domain maps to 924–1237 (HDLLGSINSS…LAVEATLAPQ (314 aa)). The tract at residues 1076–1237 (HSCVGSPLLY…LAVEATLAPQ (162 aa)) is C-terminal hotdog fold. The interval 1461-1747 (GMPDSLYLQR…SETDSKKLLL (287 aa)) is enoyl reductase (ER) domain. A ketoreductase (KR) domain region spans residues 1771-1948 (AVYLLVGGSG…PATSLALTAV (178 aa)). In terms of domain architecture, Carrier spans 2059–2136 (EATQLLLAAI…KIVDSVIVKR (78 aa)). Residue Ser2096 is modified to O-(pantetheine 4'-phosphoryl)serine.

It functions in the pathway mycotoxin biosynthesis. In terms of biological role, reducing polyketide synthase (PKS); part of the Tox1A locus, one of the 2 loci that mediate the biosynthesis of T-toxin, a family of linear polyketides 37 to 45 carbons in length, of which the major component is 41 carbons, and which leads to high virulence to maize. One of the PKSs (PKS1 or PKS2) could synthesize a precursor, used subsequently by the other PKS as starter unit, to add additional carbons. Variability in the length of the final carbon backbone C35-47 could be achieved by varying the number of condensation cycles, or use of different starter or extender units or might be due to decarboxylation of the penultimate product, catalyzed by DEC1. Additional proteins are required for the biosynthesis of T-toxin, including oxidoreductases RED1, RED2, RED3, LAM1 and OXI1, as well as esterase TOX9. The protein is Reducing polyketide synthase PKS2 of Cochliobolus heterostrophus (strain C4 / ATCC 48331 / race T) (Southern corn leaf blight fungus).